The primary structure comprises 239 residues: Fatty acid metabolism regulator protein (239 aa).

One can recognise an HTH gntR-type domain in the interval 6 to 74 (QSPAGFAEEY…HGKPTKVNNF (69 aa)). The H-T-H motif DNA-binding region spans 34–53 (ERELSELIGVTRTTLREVLQ).

In terms of assembly, homodimer.

The protein localises to the cytoplasm. Functionally, multifunctional regulator of fatty acid metabolism. The polypeptide is Fatty acid metabolism regulator protein (Serratia proteamaculans (strain 568)).